The chain runs to 243 residues: Probable transcriptional regulatory protein LSEI_1022 (243 aa).

Residues 1–23 (MSGHSKWHNIQGRKNAQDSKRGK) are disordered.

This sequence belongs to the TACO1 family.

Its subcellular location is the cytoplasm. This chain is Probable transcriptional regulatory protein LSEI_1022, found in Lacticaseibacillus paracasei (strain ATCC 334 / BCRC 17002 / CCUG 31169 / CIP 107868 / KCTC 3260 / NRRL B-441) (Lactobacillus paracasei).